Reading from the N-terminus, the 540-residue chain is MYGGEDFNNTQQDFYDDYAHTGDPALDLEYERNYYANRMPENVKYFLINFCQAIKEGNLYDIQNMYENTFPQISDHHFDKSAWPEEQEVGAIVDNDKVFLILYKELYYRHIHARIPGGPKLDQRINSFFNYCDFFNLIISAQNPVLLELPDIWLWELVDEFVYQFQNFAQYRARLTDKSQDEIQQLCVNHSNVWSILCILNVLHSLVDISNIKKQLEAISQGIDPQTVAGDFGKLAFYKMLGYFSLVGLLRVHSLLGDYYQAIKVLEPIEIHKKSAYSHIPACQISTSYYVGFAYMMMRRYADAIRTFSDILLYIQRTKQLYSTRSYQNDQINKQAEQMYHLLAICLVLHPQCIDESIQQVLREKNYHDAMFKMQCGDLEVFKSFFVFACPRFVSPCPPVADAPLEDYVKDPMEHQLLVFMDEVRQQKDLPTTRSYLKLYTTLPLTKLASFIDPNANEDDVSKLLIRLLCFKHKMRNLVWSKGPSGLEGTFKSGSELDFYIDDDMIHIADTKVSHRYGDFFVRKIMKFNDLNRKLKNINI.

In terms of domain architecture, PCI spans 307 to 515 (TFSDILLYIQ…IHIADTKVSH (209 aa)).

This sequence belongs to the eIF-3 subunit L family. In terms of assembly, component of the eukaryotic translation initiation factor 3 (eIF-3) complex. The eIF-3 complex interacts with pix.

The protein resides in the cytoplasm. In terms of biological role, component of the eukaryotic translation initiation factor 3 (eIF-3) complex, which is involved in protein synthesis of a specialized repertoire of mRNAs and, together with other initiation factors, stimulates binding of mRNA and methionyl-tRNAi to the 40S ribosome. The eIF-3 complex specifically targets and initiates translation of a subset of mRNAs involved in cell proliferation. This Drosophila grimshawi (Hawaiian fruit fly) protein is Eukaryotic translation initiation factor 3 subunit L.